The chain runs to 289 residues: Phosphatidylserine decarboxylase proenzyme (289 aa).

Residues Asp-92, His-149, and Ser-254 each act as charge relay system; for autoendoproteolytic cleavage activity in the active site. Ser-254 (schiff-base intermediate with substrate; via pyruvic acid; for decarboxylase activity) is an active-site residue. Residue Ser-254 is modified to Pyruvic acid (Ser); by autocatalysis.

The protein belongs to the phosphatidylserine decarboxylase family. PSD-B subfamily. Prokaryotic type I sub-subfamily. Heterodimer of a large membrane-associated beta subunit and a small pyruvoyl-containing alpha subunit. Requires pyruvate as cofactor. Post-translationally, is synthesized initially as an inactive proenzyme. Formation of the active enzyme involves a self-maturation process in which the active site pyruvoyl group is generated from an internal serine residue via an autocatalytic post-translational modification. Two non-identical subunits are generated from the proenzyme in this reaction, and the pyruvate is formed at the N-terminus of the alpha chain, which is derived from the carboxyl end of the proenzyme. The autoendoproteolytic cleavage occurs by a canonical serine protease mechanism, in which the side chain hydroxyl group of the serine supplies its oxygen atom to form the C-terminus of the beta chain, while the remainder of the serine residue undergoes an oxidative deamination to produce ammonia and the pyruvoyl prosthetic group on the alpha chain. During this reaction, the Ser that is part of the protease active site of the proenzyme becomes the pyruvoyl prosthetic group, which constitutes an essential element of the active site of the mature decarboxylase.

Its subcellular location is the cell membrane. It carries out the reaction a 1,2-diacyl-sn-glycero-3-phospho-L-serine + H(+) = a 1,2-diacyl-sn-glycero-3-phosphoethanolamine + CO2. The protein operates within phospholipid metabolism; phosphatidylethanolamine biosynthesis; phosphatidylethanolamine from CDP-diacylglycerol: step 2/2. Its function is as follows. Catalyzes the formation of phosphatidylethanolamine (PtdEtn) from phosphatidylserine (PtdSer). This is Phosphatidylserine decarboxylase proenzyme from Pseudomonas aeruginosa (strain ATCC 15692 / DSM 22644 / CIP 104116 / JCM 14847 / LMG 12228 / 1C / PRS 101 / PAO1).